The primary structure comprises 486 residues: Non-structural protein 1 (486 aa).

The tract at residues 1 to 81 (MATFKDACYQ…CFLDDNPHLL (81 aa)) is RNA-binding. Residues 42–79 (CLDCCQYTDLTYCQGCLIYHVCEWCSQYSRCFLDDNPH) are zinc-binding domain. The tract at residues 82–176 (RMRTFRNEIT…INQTPFSFTN (95 aa)) is important for cytoskeleton localization. The tract at residues 317–486 (EVHNCKWCSI…EHDSGVSDVE (170 aa)) is interaction with host IRF3. An IKBKB-like degron (ILD) motif motif is present at residues 479 to 483 (DSGVS). A pLxIS motif motif is present at residues 480–483 (SGVS).

The protein belongs to the rotavirus NSP1 family. In terms of assembly, interacts (via C-terminus) with host IRF3; this interaction leads to IRF3 degradation. Interacts with host IRF7; this interaction leads to IRF7 degradation. Interacts with host CUL1 and CUL3. Interacts with host BTRC. The C-terminal region is phosphorylated by host CKII/CSNK2A1. Phosphorylation of the DSGXS motif is essential for host NF-kappa-B inhibition.

The protein localises to the host cytoplasm. It localises to the host cytoskeleton. Its function is as follows. Plays a role in the inhibition of host innate immunity by inducing the degradation of key host factors required to activate interferon production such as IRF3, IRF5 or IRF7. Associates with components of cullin RING ligases (CRLs) including CUL1 or CUL3, which are essential multisubunit ubiquitination complexes, to modulate their activities. Recognizes the host NF-kappa-B regulator BTRC through the presence of a DSGXS motif in the C-terminal substrate recognition domain. The protein is Non-structural protein 1 of Rotavirus A (strain RVA/Human/Philippines/L26/1987/G12P1B[4]) (RV-A).